The primary structure comprises 299 residues: tRNA-cytidine(32) 2-sulfurtransferase (299 aa).

Positions 49-54 match the PP-loop motif motif; the sequence is SGGKDS. 3 residues coordinate [4Fe-4S] cluster: C124, C127, and C215.

The protein belongs to the TtcA family. As to quaternary structure, homodimer. Requires Mg(2+) as cofactor. It depends on [4Fe-4S] cluster as a cofactor.

The protein resides in the cytoplasm. It carries out the reaction cytidine(32) in tRNA + S-sulfanyl-L-cysteinyl-[cysteine desulfurase] + AH2 + ATP = 2-thiocytidine(32) in tRNA + L-cysteinyl-[cysteine desulfurase] + A + AMP + diphosphate + H(+). The protein operates within tRNA modification. Functionally, catalyzes the ATP-dependent 2-thiolation of cytidine in position 32 of tRNA, to form 2-thiocytidine (s(2)C32). The sulfur atoms are provided by the cysteine/cysteine desulfurase (IscS) system. In Deinococcus radiodurans (strain ATCC 13939 / DSM 20539 / JCM 16871 / CCUG 27074 / LMG 4051 / NBRC 15346 / NCIMB 9279 / VKM B-1422 / R1), this protein is tRNA-cytidine(32) 2-sulfurtransferase.